We begin with the raw amino-acid sequence, 150 residues long: Large ribosomal subunit protein uL15 (150 aa).

The interval 1–60 (MKLSDLRPNPGANKRRKRVGRGPGSGHGKTATRGHKGQKSRSGGLKDPRRFEGGRSTTLM) is disordered. Basic residues predominate over residues 30–39 (TATRGHKGQK). Over residues 44–53 (GLKDPRRFEG) the composition is skewed to basic and acidic residues.

This sequence belongs to the universal ribosomal protein uL15 family. In terms of assembly, part of the 50S ribosomal subunit.

Functionally, binds to the 23S rRNA. The protein is Large ribosomal subunit protein uL15 of Thermus thermophilus (strain ATCC BAA-163 / DSM 7039 / HB27).